A 362-amino-acid chain; its full sequence is Chorismate synthase (362 aa).

Position 46 (Arg-46) interacts with NADP(+). FMN is bound by residues 121–123 (RAS), 237–238 (NA), Gly-277, 292–296 (KPTPS), and Arg-318.

Belongs to the chorismate synthase family. Homotetramer. FMNH2 is required as a cofactor.

The enzyme catalyses 5-O-(1-carboxyvinyl)-3-phosphoshikimate = chorismate + phosphate. It functions in the pathway metabolic intermediate biosynthesis; chorismate biosynthesis; chorismate from D-erythrose 4-phosphate and phosphoenolpyruvate: step 7/7. In terms of biological role, catalyzes the anti-1,4-elimination of the C-3 phosphate and the C-6 proR hydrogen from 5-enolpyruvylshikimate-3-phosphate (EPSP) to yield chorismate, which is the branch point compound that serves as the starting substrate for the three terminal pathways of aromatic amino acid biosynthesis. This reaction introduces a second double bond into the aromatic ring system. The chain is Chorismate synthase from Campylobacter lari (strain RM2100 / D67 / ATCC BAA-1060).